The following is a 658-amino-acid chain: Threonine--tRNA ligase (658 aa).

The 61-residue stretch at 1-61 folds into the TGS domain; sequence MSDVRVTVQR…AAGDVVEPIT (61 aa). The segment at 259 to 554 is catalytic; the sequence is DHRRLGAELD…LLEHYAGALP (296 aa). Positions 353, 404, and 531 each coordinate Zn(2+).

Belongs to the class-II aminoacyl-tRNA synthetase family. Homodimer. It depends on Zn(2+) as a cofactor.

Its subcellular location is the cytoplasm. The catalysed reaction is tRNA(Thr) + L-threonine + ATP = L-threonyl-tRNA(Thr) + AMP + diphosphate + H(+). Catalyzes the attachment of threonine to tRNA(Thr) in a two-step reaction: L-threonine is first activated by ATP to form Thr-AMP and then transferred to the acceptor end of tRNA(Thr). Also edits incorrectly charged L-seryl-tRNA(Thr). In Parafrankia sp. (strain EAN1pec), this protein is Threonine--tRNA ligase.